A 137-amino-acid polypeptide reads, in one-letter code: Integration host factor subunit beta (137 aa).

A compositionally biased stretch (basic and acidic residues) spans 75 to 92 (KRVPHFKAGKELRERVDR). Residues 75-137 (KRVPHFKAGK…EGGGLNLARS (63 aa)) are disordered. Positions 128 to 137 (EGGGLNLARS) are enriched in gly residues.

It belongs to the bacterial histone-like protein family. Heterodimer of an alpha and a beta chain.

Its function is as follows. This protein is one of the two subunits of integration host factor, a specific DNA-binding protein that functions in genetic recombination as well as in transcriptional and translational control. This chain is Integration host factor subunit beta, found in Cupriavidus pinatubonensis (strain JMP 134 / LMG 1197) (Cupriavidus necator (strain JMP 134)).